Consider the following 295-residue polypeptide: Phosphatidylserine decarboxylase proenzyme (295 aa).

Residues D113, H169, and S256 each act as charge relay system; for autoendoproteolytic cleavage activity in the active site. The active-site Schiff-base intermediate with substrate; via pyruvic acid; for decarboxylase activity is S256. S256 bears the Pyruvic acid (Ser); by autocatalysis mark.

Belongs to the phosphatidylserine decarboxylase family. PSD-B subfamily. Prokaryotic type II sub-subfamily. In terms of assembly, heterodimer of a large membrane-associated beta subunit and a small pyruvoyl-containing alpha subunit. Pyruvate serves as cofactor. Is synthesized initially as an inactive proenzyme. Formation of the active enzyme involves a self-maturation process in which the active site pyruvoyl group is generated from an internal serine residue via an autocatalytic post-translational modification. Two non-identical subunits are generated from the proenzyme in this reaction, and the pyruvate is formed at the N-terminus of the alpha chain, which is derived from the carboxyl end of the proenzyme. The autoendoproteolytic cleavage occurs by a canonical serine protease mechanism, in which the side chain hydroxyl group of the serine supplies its oxygen atom to form the C-terminus of the beta chain, while the remainder of the serine residue undergoes an oxidative deamination to produce ammonia and the pyruvoyl prosthetic group on the alpha chain. During this reaction, the Ser that is part of the protease active site of the proenzyme becomes the pyruvoyl prosthetic group, which constitutes an essential element of the active site of the mature decarboxylase.

It localises to the cell membrane. It catalyses the reaction a 1,2-diacyl-sn-glycero-3-phospho-L-serine + H(+) = a 1,2-diacyl-sn-glycero-3-phosphoethanolamine + CO2. It participates in phospholipid metabolism; phosphatidylethanolamine biosynthesis; phosphatidylethanolamine from CDP-diacylglycerol: step 2/2. Functionally, catalyzes the formation of phosphatidylethanolamine (PtdEtn) from phosphatidylserine (PtdSer). The protein is Phosphatidylserine decarboxylase proenzyme of Clostridium botulinum (strain Langeland / NCTC 10281 / Type F).